Consider the following 489-residue polypeptide: Ecdysteroid UDP-glucosyltransferase (489 aa).

The signal sequence occupies residues 1–17; sequence MVFLIIALTLLATGARA.

It belongs to the UDP-glycosyltransferase family.

Its function is as follows. Catalyzes the transfer of glucose from UDP-glucose to ecdysteroids which are insect molting hormones. Expression of egt interferes with normal insect development and block molting. In Orgyia pseudotsugata (Douglas-fir tussock moth), this protein is Ecdysteroid UDP-glucosyltransferase (EGT).